The following is a 528-amino-acid chain: tRNA pseudouridine synthase 1 (528 aa).

The interval 1-59 (MPSDASTGYVDDQPGDEAYKRGALYKQTKARRADYDSDKEAKRPCTEDSDVALAGTSEE) is disordered. Residues 31–46 (RRADYDSDKEAKRPCT) show a composition bias toward basic and acidic residues. Asp126 acts as the Nucleophile in catalysis. Polar residues-rich tracts occupy residues 486–495 (SSSPQENASP) and 506–528 (GDNTISAEQPKTATEVPTTQSDA). Positions 486–528 (SSSPQENASPEAQKAPETPAGDNTISAEQPKTATEVPTTQSDA) are disordered.

The protein belongs to the tRNA pseudouridine synthase TruA family. Zn(2+) serves as cofactor.

It is found in the nucleus. It catalyses the reaction a uridine in tRNA = a pseudouridine in tRNA. The enzyme catalyses uridine in snRNA = pseudouridine in snRNA. It carries out the reaction a uridine in mRNA = a pseudouridine in mRNA. Its function is as follows. Formation of pseudouridine at positions 27 and 28 in the anticodon stem and loop of transfer RNAs; at positions 34 and 36 of intron-containing precursor tRNA(Ile) and at position 35 in the intron-containing tRNA(Tyr). Catalyzes pseudouridylation at position 44 in U2 snRNA. Also catalyzes pseudouridylation of mRNAs. The chain is tRNA pseudouridine synthase 1 (PUS1) from Eremothecium gossypii (strain ATCC 10895 / CBS 109.51 / FGSC 9923 / NRRL Y-1056) (Yeast).